A 151-amino-acid polypeptide reads, in one-letter code: Acidic phospholipase A2 6 (151 aa).

Residues 1–27 (MYPAHLLVLLAVCVSLLGAASIPARPL) form the signal peptide. Disulfide bonds link cysteine 38/cysteine 104, cysteine 54/cysteine 151, cysteine 56/cysteine 72, cysteine 71/cysteine 132, cysteine 78/cysteine 125, cysteine 88/cysteine 118, and cysteine 111/cysteine 123. Residues tyrosine 55, glycine 57, and glycine 59 each coordinate Ca(2+). Histidine 75 is a catalytic residue. Residue aspartate 76 coordinates Ca(2+). Residue aspartate 126 is part of the active site.

It belongs to the phospholipase A2 family. Group I subfamily. D49 sub-subfamily. Requires Ca(2+) as cofactor. In terms of tissue distribution, expressed by the venom gland.

It is found in the secreted. It catalyses the reaction a 1,2-diacyl-sn-glycero-3-phosphocholine + H2O = a 1-acyl-sn-glycero-3-phosphocholine + a fatty acid + H(+). Its function is as follows. PLA2 catalyzes the calcium-dependent hydrolysis of the 2-acyl groups in 3-sn-phosphoglycerides. The protein is Acidic phospholipase A2 6 of Tropidechis carinatus (Australian rough-scaled snake).